The chain runs to 101 residues: MIEEIVKESEKGILIDIEVTTNAKKNEIGKINEWRKRIEIRIREQPIEGKANKAIVKFLKGIFKSEIFINSGTTSSQKTVLIPDKTKEDVVKILKKEIKSI.

It belongs to the UPF0235 family.

This Methanococcus maripaludis (strain C7 / ATCC BAA-1331) protein is UPF0235 protein MmarC7_0309.